A 380-amino-acid polypeptide reads, in one-letter code: Glucose-1-phosphate adenylyltransferase (380 aa).

Residues Gly-164, 179 to 180 (EK), and Ser-190 each bind alpha-D-glucose 1-phosphate.

It belongs to the bacterial/plant glucose-1-phosphate adenylyltransferase family. As to quaternary structure, homotetramer.

The catalysed reaction is alpha-D-glucose 1-phosphate + ATP + H(+) = ADP-alpha-D-glucose + diphosphate. It functions in the pathway glycan biosynthesis; glycogen biosynthesis. In terms of biological role, involved in the biosynthesis of ADP-glucose, a building block required for the elongation reactions to produce glycogen. Catalyzes the reaction between ATP and alpha-D-glucose 1-phosphate (G1P) to produce pyrophosphate and ADP-Glc. The sequence is that of Glucose-1-phosphate adenylyltransferase from Streptococcus sanguinis (strain SK36).